The following is a 162-amino-acid chain: Cyclic pyranopterin monophosphate synthase (162 aa).

Substrate is bound by residues 75–77 (LCH) and 113–114 (ME). Asp-128 is an active-site residue.

It belongs to the MoaC family. As to quaternary structure, homohexamer; trimer of dimers.

It carries out the reaction (8S)-3',8-cyclo-7,8-dihydroguanosine 5'-triphosphate = cyclic pyranopterin phosphate + diphosphate. The protein operates within cofactor biosynthesis; molybdopterin biosynthesis. Its function is as follows. Catalyzes the conversion of (8S)-3',8-cyclo-7,8-dihydroguanosine 5'-triphosphate to cyclic pyranopterin monophosphate (cPMP). The chain is Cyclic pyranopterin monophosphate synthase from Burkholderia cenocepacia (strain ATCC BAA-245 / DSM 16553 / LMG 16656 / NCTC 13227 / J2315 / CF5610) (Burkholderia cepacia (strain J2315)).